The chain runs to 128 residues: Small ribosomal subunit protein uS13 (128 aa).

Positions 95 to 118 (GLPVRGQRTHTNARTRKGPKKGLV) are enriched in basic residues. The tract at residues 95–128 (GLPVRGQRTHTNARTRKGPKKGLVRKAAAPAPMA) is disordered.

It belongs to the universal ribosomal protein uS13 family. As to quaternary structure, part of the 30S ribosomal subunit. Forms a loose heterodimer with protein S19. Forms two bridges to the 50S subunit in the 70S ribosome.

Located at the top of the head of the 30S subunit, it contacts several helices of the 16S rRNA. In the 70S ribosome it contacts the 23S rRNA (bridge B1a) and protein L5 of the 50S subunit (bridge B1b), connecting the 2 subunits; these bridges are implicated in subunit movement. Contacts the tRNAs in the A and P-sites. The chain is Small ribosomal subunit protein uS13 from Anaeromyxobacter dehalogenans (strain 2CP-1 / ATCC BAA-258).